A 153-amino-acid chain; its full sequence is Nucleoside diphosphate kinase (153 aa).

Positions 13, 61, 89, 95, 106, and 116 each coordinate ATP. At threonine 95 the chain carries Phosphothreonine. Residue histidine 119 is the Pros-phosphohistidine intermediate of the active site.

Belongs to the NDK family. As to quaternary structure, homohexamer and homotetramer. Interacts with TOM40 preferentially in an unfolded, unphosphorylated form. The cofactor is Mg(2+). In terms of processing, the N-terminus is blocked.

It localises to the cytoplasm. The protein resides in the mitochondrion intermembrane space. It carries out the reaction a 2'-deoxyribonucleoside 5'-diphosphate + ATP = a 2'-deoxyribonucleoside 5'-triphosphate + ADP. The enzyme catalyses a ribonucleoside 5'-diphosphate + ATP = a ribonucleoside 5'-triphosphate + ADP. Major role in the synthesis of nucleoside triphosphates other than ATP. The ATP gamma phosphate is transferred to the NDP beta phosphate via a ping-pong mechanism, using a phosphorylated active-site intermediate. Required for repair of UV radiation- and etoposide-induced DNA damage. This chain is Nucleoside diphosphate kinase (YNK1), found in Saccharomyces cerevisiae (strain ATCC 204508 / S288c) (Baker's yeast).